The primary structure comprises 80 residues: Cytochrome c oxidase subunit 7A1, mitochondrial (80 aa).

A mitochondrion-targeting transit peptide spans Met-1–Arg-21. The Mitochondrial matrix portion of the chain corresponds to Phe-22–Gly-46. The helical transmembrane segment at Ala-47–Ser-75 threads the bilayer. The Mitochondrial intermembrane portion of the chain corresponds to Phe-76–Lys-80.

This sequence belongs to the cytochrome c oxidase VIIa family. As to quaternary structure, component of the complex IV (CIV, cytochrome c oxidase), a multisubunit enzyme composed of 14 subunits. The complex is composed of a catalytic core of 3 subunits MT-CO1, MT-CO2 and MT-CO3, encoded in the mitochondrial DNA, and 11 supernumerary subunits COX4I1 (or COX4I2), COX5A, COX5B, COX6A2 (or COX6A1), COX6B1 (or COX6B2), COX6C, COX7A1 (or COX7A2), COX7B, COX7C, COX8B and NDUFA4, which are encoded in the nuclear genome. The complex exists as a monomer or a dimer and forms supercomplexes (SCs) in the inner mitochondrial membrane with NADH-ubiquinone oxidoreductase (complex I, CI) and ubiquinol-cytochrome c oxidoreductase (cytochrome b-c1 complex, complex III, CIII), resulting in different assemblies (supercomplex SCI(1)III(2)IV(1) and megacomplex MCI(2)III(2)IV(2)).

Its subcellular location is the mitochondrion inner membrane. It functions in the pathway energy metabolism; oxidative phosphorylation. Functionally, component of the mitochondrial respiratory complex IV (CIV, also named cytochrome c oxidase complex), the last enzyme in the mitochondrial electron transport chain which drives oxidative phosphorylation. The CIV complex is the component of the respiratory chain that catalyzes the reduction of oxygen to water. Acts as an assembly factor that specifically drives the homodimerization of CIV complexes, mediating the formation of mitochondrial respiratory supercomplexes (respirasomes) containing two CIV: supercomplxes with two molecules of CIV show improved activity. Despite being highly expressed in brown adipose tissue, not required for thermogenesis. This is Cytochrome c oxidase subunit 7A1, mitochondrial (COX7A1) from Bos taurus (Bovine).